The chain runs to 217 residues: Uracil-DNA glycosylase (217 aa).

The active-site Proton acceptor is the aspartate 62.

The protein belongs to the uracil-DNA glycosylase (UDG) superfamily. UNG family.

It is found in the cytoplasm. The catalysed reaction is Hydrolyzes single-stranded DNA or mismatched double-stranded DNA and polynucleotides, releasing free uracil.. Functionally, excises uracil residues from the DNA which can arise as a result of misincorporation of dUMP residues by DNA polymerase or due to deamination of cytosine. The chain is Uracil-DNA glycosylase from Streptococcus sanguinis (strain SK36).